The chain runs to 100 residues: Urease subunit gamma (100 aa).

The protein belongs to the urease gamma subunit family. As to quaternary structure, heterotrimer of UreA (gamma), UreB (beta) and UreC (alpha) subunits. Three heterotrimers associate to form the active enzyme.

It is found in the cytoplasm. It catalyses the reaction urea + 2 H2O + H(+) = hydrogencarbonate + 2 NH4(+). It participates in nitrogen metabolism; urea degradation; CO(2) and NH(3) from urea (urease route): step 1/1. This is Urease subunit gamma from Prochlorococcus marinus (strain MIT 9303).